Consider the following 495-residue polypeptide: DNA-directed RNA polymerase subunit alpha (495 aa).

Positions 1–301 (MPYIKHIETK…RMLASLQAPP (301 aa)) are alpha N-terminal domain (alpha-NTD). Disordered regions lie at residues 159 to 227 (SLVP…EAPH) and 391 to 495 (QEQV…PEET). Positions 170–237 (PRDPLEPEND…IPSMRDDHMT (68 aa)) are insert. Over residues 172–186 (DPLEPENDSKSETKS) the composition is skewed to basic and acidic residues. Composition is skewed to polar residues over residues 207–219 (VNAQIIDTDSNST) and 391–403 (QEQVVNQPSSQIA). The interval 317–495 (AKEIALTPIE…LSSSQNPEET (179 aa)) is alpha C-terminal domain (alpha-CTD). Residues 417-426 (RPIDSKETRR) are compositionally biased toward basic and acidic residues. The segment covering 444-453 (RKSSKTKVKA) has biased composition (basic residues). 2 stretches are compositionally biased toward polar residues: residues 464-473 (KSANLQQAEE) and 486-495 (LSSSQNPEET).

This sequence belongs to the RNA polymerase alpha chain family. As to quaternary structure, in plastids the minimal PEP RNA polymerase catalytic core is composed of four subunits: alpha, beta, beta', and beta''. When a (nuclear-encoded) sigma factor is associated with the core the holoenzyme is formed, which can initiate transcription.

The protein resides in the plastid. It localises to the chloroplast. The catalysed reaction is RNA(n) + a ribonucleoside 5'-triphosphate = RNA(n+1) + diphosphate. Functionally, DNA-dependent RNA polymerase catalyzes the transcription of DNA into RNA using the four ribonucleoside triphosphates as substrates. The sequence is that of DNA-directed RNA polymerase subunit alpha from Nephroselmis olivacea (Green alga).